The primary structure comprises 252 residues: 3-dehydroquinate dehydratase (252 aa).

3-dehydroquinate-binding positions include Ser21, 46-48 (EWR), and Arg82. His143 acts as the Proton donor/acceptor in catalysis. Lys170 (schiff-base intermediate with substrate) is an active-site residue. 3-dehydroquinate-binding residues include Arg213, Ser232, and Gln236.

This sequence belongs to the type-I 3-dehydroquinase family. As to quaternary structure, homodimer.

It carries out the reaction 3-dehydroquinate = 3-dehydroshikimate + H2O. It participates in metabolic intermediate biosynthesis; chorismate biosynthesis; chorismate from D-erythrose 4-phosphate and phosphoenolpyruvate: step 3/7. In terms of biological role, involved in the third step of the chorismate pathway, which leads to the biosynthesis of aromatic amino acids. Catalyzes the cis-dehydration of 3-dehydroquinate (DHQ) and introduces the first double bond of the aromatic ring to yield 3-dehydroshikimate. This is 3-dehydroquinate dehydratase from Shigella dysenteriae.